Consider the following 218-residue polypeptide: Ribose-5-phosphate isomerase A (218 aa).

Residues 28–31 (TGST), 81–84 (DGAD), and 94–97 (KGGG) contribute to the substrate site. Catalysis depends on Glu-103, which acts as the Proton acceptor. Lys-121 contributes to the substrate binding site.

This sequence belongs to the ribose 5-phosphate isomerase family. In terms of assembly, homodimer.

It catalyses the reaction aldehydo-D-ribose 5-phosphate = D-ribulose 5-phosphate. The protein operates within carbohydrate degradation; pentose phosphate pathway; D-ribose 5-phosphate from D-ribulose 5-phosphate (non-oxidative stage): step 1/1. Its function is as follows. Catalyzes the reversible conversion of ribose-5-phosphate to ribulose 5-phosphate. The polypeptide is Ribose-5-phosphate isomerase A (Vibrio cholerae serotype O1 (strain ATCC 39541 / Classical Ogawa 395 / O395)).